A 205-amino-acid polypeptide reads, in one-letter code: Holliday junction branch migration complex subunit RuvA (205 aa).

The segment at 1 to 64 (MIGRLKGILV…EDAQLLYGFI (64 aa)) is domain I. The interval 65 to 143 (HKEERSLFRL…SLMEASMGAE (79 aa)) is domain II. The interval 144-156 (REFVLKSNFTPAP) is flexible linker. The tract at residues 157–205 (VAATVEEDAIAALLSLGYKPQQASKAVSSAFQEGMDPEQLIKAALKSML) is domain III.

Belongs to the RuvA family. In terms of assembly, homotetramer. Forms an RuvA(8)-RuvB(12)-Holliday junction (HJ) complex. HJ DNA is sandwiched between 2 RuvA tetramers; dsDNA enters through RuvA and exits via RuvB. An RuvB hexamer assembles on each DNA strand where it exits the tetramer. Each RuvB hexamer is contacted by two RuvA subunits (via domain III) on 2 adjacent RuvB subunits; this complex drives branch migration. In the full resolvosome a probable DNA-RuvA(4)-RuvB(12)-RuvC(2) complex forms which resolves the HJ.

The protein localises to the cytoplasm. Functionally, the RuvA-RuvB-RuvC complex processes Holliday junction (HJ) DNA during genetic recombination and DNA repair, while the RuvA-RuvB complex plays an important role in the rescue of blocked DNA replication forks via replication fork reversal (RFR). RuvA specifically binds to HJ cruciform DNA, conferring on it an open structure. The RuvB hexamer acts as an ATP-dependent pump, pulling dsDNA into and through the RuvAB complex. HJ branch migration allows RuvC to scan DNA until it finds its consensus sequence, where it cleaves and resolves the cruciform DNA. The polypeptide is Holliday junction branch migration complex subunit RuvA (Shewanella amazonensis (strain ATCC BAA-1098 / SB2B)).